We begin with the raw amino-acid sequence, 355 residues long: Fructose-1,6-bisphosphatase class 1 (355 aa).

Mg(2+) contacts are provided by Glu94, Asp116, Leu118, and Asp119. Substrate is bound by residues 119–122, Asn211, and 263–265; these read DGSS and YLY. Glu283 provides a ligand contact to Mg(2+).

Belongs to the FBPase class 1 family. In terms of assembly, homotetramer. Mg(2+) serves as cofactor.

It is found in the cytoplasm. It carries out the reaction beta-D-fructose 1,6-bisphosphate + H2O = beta-D-fructose 6-phosphate + phosphate. The protein operates within carbohydrate biosynthesis; Calvin cycle. This is Fructose-1,6-bisphosphatase class 1 from Rhodospirillum rubrum (strain ATCC 11170 / ATH 1.1.1 / DSM 467 / LMG 4362 / NCIMB 8255 / S1).